The primary structure comprises 486 residues: Probable transporter MCH1 (486 aa).

Over 1 to 29 (MPLSKVEHYLSYHTRLLLPHVLSLQSSHR) the chain is Cytoplasmic. Residues 30–50 (VAYIFSLLSAVSTGFITLISL) form a helical membrane-spanning segment. Topologically, residues 51 to 67 (YSQPWQKHLNYSSWQIN) are vacuolar. N60 is a glycosylation site (N-linked (GlcNAc...) asparagine). A helical membrane pass occupies residues 68 to 88 (TIASMTNLGMYLTPPILGMIA). Residues 89 to 93 (DSHGP) are Cytoplasmic-facing. Residues 94–114 (ITLSLLAIIGFIPSYSYLAYV) traverse the membrane as a helical segment. Residues 115 to 133 (FNHPELSLGGNGDSSFNLS) are Vacuolar-facing. N-linked (GlcNAc...) asparagine glycosylation occurs at N131. Residues 134–154 (IICFVFIGISTSALYFSALLT) traverse the membrane as a helical segment. The Cytoplasmic portion of the chain corresponds to 155–163 (CTKLYPHTK). The chain crosses the membrane as a helical span at residues 164-184 (LLSISLPTTCYGISSVVGSQL). Over 185–212 (LRIKWFWSSNASSSSSNSDLNLGRVFQT) the chain is Vacuolar. N-linked (GlcNAc...) asparagine glycosylation is present at N194. A helical transmembrane segment spans residues 213-233 (FALVYVVIGLLAWIATSVVSL). The Cytoplasmic segment spans residues 234–279 (LHFNEEQDNQKRLDDQTDVEQSPLLERSNHVQEKFTQTMLRIFSDP). Position 255 is a phosphoserine (S255). A helical transmembrane segment spans residues 280–300 (VTYILAVSILLSLGPLEMFIA). Over 301 to 320 (NMGSLTNLLVQLDAPTLSTK) the chain is Vacuolar. A helical transmembrane segment spans residues 321–343 (LLSTYALSSTFTRLLTGIVADFF). Residues 344-347 (AKKK) lie on the Cytoplasmic side of the membrane. The helical transmembrane segment at 348-368 (ISIKWILLTFLSLGVCAQLFL) threads the bilayer. Residues 369-385 (LKMTSSASPWGLVPTGS) lie on the Vacuolar side of the membrane. A helical membrane pass occupies residues 386–406 (LVGIVYGGLFTVYPTLVLLVW). Over 407-413 (GERSFGT) the chain is Cytoplasmic. The helical transmembrane segment at 414-434 (VYGSLLIAPAIGSMIFCMLYA) threads the bilayer. Residues 435-456 (KFYDSRCMSGGGDLRNPSCISA) are Vacuolar-facing. The helical transmembrane segment at 457-477 (VYKYSSIAFVVSAVLSAVVFW) threads the bilayer. Over 478 to 486 (KLKSRKLRI) the chain is Cytoplasmic.

This sequence belongs to the major facilitator superfamily.

The protein resides in the vacuole membrane. Functionally, probable transporter. Does not act in the transport of monocarboxylic acids across the plasma membrane. This chain is Probable transporter MCH1 (MCH1), found in Saccharomyces cerevisiae (strain ATCC 204508 / S288c) (Baker's yeast).